Here is a 173-residue protein sequence, read N- to C-terminus: Fimbrial protein PrsE (173 aa).

An N-terminal signal peptide occupies residues 1–24 (MKKIRGLCLPVMLGAVLMSQHVHA).

It is found in the secreted. The protein resides in the fimbrium. Fimbriae (also called pili), polar filaments radiating from the surface of the bacterium to a length of 0.5-1.5 micrometers and numbering 100-300 per cell, enable bacteria to colonize the epithelium of specific host organs. In Escherichia coli, this protein is Fimbrial protein PrsE (prsE).